The primary structure comprises 172 residues: RNA silencing suppressor p19 (172 aa).

The span at 1–20 (MERAIQGNDTREQANGERWD) shows a compositional bias: basic and acidic residues. Residues 1 to 27 (MERAIQGNDTREQANGERWDGGSGGIT) are disordered.

It belongs to the tombusvirus protein p19 family. Homodimer.

Functionally, acts as a suppressor of RNA-mediated gene silencing, also known as post-transcriptional gene silencing (PTGS), a mechanism of plant viral defense that limits the accumulation of viral RNAs. Binds to short interfering RNAs (siRNAs) with high affinity. Acts as a molecular caliper to specifically select siRNAs based on the length of the duplex region of the RNA. The protein is RNA silencing suppressor p19 of Dianthus caryophyllus (Carnation).